A 1464-amino-acid polypeptide reads, in one-letter code: DNA polymerase III PolC-type (1464 aa).

The region spanning 426-582 is the Exonuclease domain; the sequence is YVVFDVETTG…YDAEATGRLL (157 aa).

Belongs to the DNA polymerase type-C family. PolC subfamily.

The protein resides in the cytoplasm. It carries out the reaction DNA(n) + a 2'-deoxyribonucleoside 5'-triphosphate = DNA(n+1) + diphosphate. Its function is as follows. Required for replicative DNA synthesis. This DNA polymerase also exhibits 3' to 5' exonuclease activity. The sequence is that of DNA polymerase III PolC-type from Streptococcus thermophilus (strain ATCC BAA-250 / LMG 18311).